Here is an 898-residue protein sequence, read N- to C-terminus: Coiled-coil domain-containing protein 186 (898 aa).

Disordered stretches follow at residues 1-43 (MSET…NESK), 68-95 (NYIPDHGGGEDSCAKTDTGSENSEQIAN), and 702-749 (RRKL…SSVA). Residue S2 is modified to N-acetylserine. Polar residues predominate over residues 82–95 (KTDTGSENSEQIAN). A coiled-coil region spans residues 201–712 (KYLQQEHIIK…RKLDQVESGS (512 aa)). Over residues 703-717 (RKLDQVESGSYDKEV) the composition is skewed to basic and acidic residues. The span at 718-734 (SSMGSRSSSSGSLNARS) shows a compositional bias: low complexity. Phosphoserine is present on S740. 2 coiled-coil regions span residues 759 to 803 (AMLI…IQSY) and 855 to 894 (KLQAVLEDTLLKNITLKENLQTLGTEIERLIKHQHELEQR).

In Homo sapiens (Human), this protein is Coiled-coil domain-containing protein 186 (CCDC186).